A 76-amino-acid chain; its full sequence is Acyl carrier protein (76 aa).

The Carrier domain maps to 1 to 76; that stretch reads MATFDKVKDI…DVVNYIEQNQ (76 aa). Ser-36 is modified (O-(pantetheine 4'-phosphoryl)serine).

The protein belongs to the acyl carrier protein (ACP) family. 4'-phosphopantetheine is transferred from CoA to a specific serine of apo-ACP by AcpS. This modification is essential for activity because fatty acids are bound in thioester linkage to the sulfhydryl of the prosthetic group.

It is found in the cytoplasm. It functions in the pathway lipid metabolism; fatty acid biosynthesis. Carrier of the growing fatty acid chain in fatty acid biosynthesis. The sequence is that of Acyl carrier protein from Natranaerobius thermophilus (strain ATCC BAA-1301 / DSM 18059 / JW/NM-WN-LF).